Reading from the N-terminus, the 152-residue chain is B3 domain-containing protein At1g10455 (152 aa).

Positions 24-131 form a DNA-binding region, TF-B3; sequence LKKKLSDSDL…EVKFKHFKSQ (108 aa).

It is found in the nucleus. The protein is B3 domain-containing protein At1g10455 of Arabidopsis thaliana (Mouse-ear cress).